The chain runs to 236 residues: Small ribosomal subunit protein uS2c (236 aa).

This sequence belongs to the universal ribosomal protein uS2 family.

It localises to the plastid. The protein resides in the chloroplast. This Platanus occidentalis (Sycamore) protein is Small ribosomal subunit protein uS2c (rps2).